Consider the following 868-residue polypeptide: Leucine--tRNA ligase (868 aa).

Residues 42-52 carry the 'HIGH' region motif; sequence PYPSGKLHMGH. Residues 627–631 carry the 'KMSKS' region motif; that stretch reads KMSKS. Residue K630 participates in ATP binding.

The protein belongs to the class-I aminoacyl-tRNA synthetase family.

Its subcellular location is the cytoplasm. It carries out the reaction tRNA(Leu) + L-leucine + ATP = L-leucyl-tRNA(Leu) + AMP + diphosphate. The polypeptide is Leucine--tRNA ligase (Pseudomonas putida (strain ATCC 700007 / DSM 6899 / JCM 31910 / BCRC 17059 / LMG 24140 / F1)).